We begin with the raw amino-acid sequence, 756 residues long: Catalase-peroxidase (756 aa).

A cross-link (tryptophyl-tyrosyl-methioninium (Trp-Tyr) (with M-270)) is located at residues 91–244 (WHSAGTYRTG…LAAVQMGLIY (154 aa)). Residue His92 is the Proton acceptor of the active site. Positions 198-230 (AQKKMQQPGDGTLVAEPENHANEESRTASGERN) are disordered. The segment covering 214–223 (PENHANEESR) has biased composition (basic and acidic residues). A cross-link (tryptophyl-tyrosyl-methioninium (Tyr-Met) (with W-91)) is located at residues 244–270 (YVNPEGPEGVPDPVASARDIRETFGRM). His285 is a heme b binding site.

It belongs to the peroxidase family. Peroxidase/catalase subfamily. As to quaternary structure, homodimer or homotetramer. Requires heme b as cofactor. In terms of processing, formation of the three residue Trp-Tyr-Met cross-link is important for the catalase, but not the peroxidase activity of the enzyme.

The enzyme catalyses H2O2 + AH2 = A + 2 H2O. It catalyses the reaction 2 H2O2 = O2 + 2 H2O. Functionally, bifunctional enzyme with both catalase and broad-spectrum peroxidase activity. The polypeptide is Catalase-peroxidase (Pseudomonas syringae pv. syringae (strain B728a)).